The chain runs to 557 residues: 2-succinyl-5-enolpyruvyl-6-hydroxy-3-cyclohexene-1-carboxylate synthase (557 aa).

This sequence belongs to the TPP enzyme family. MenD subfamily. As to quaternary structure, homodimer. Requires Mg(2+) as cofactor. It depends on Mn(2+) as a cofactor. Thiamine diphosphate serves as cofactor.

The catalysed reaction is isochorismate + 2-oxoglutarate + H(+) = 5-enolpyruvoyl-6-hydroxy-2-succinyl-cyclohex-3-ene-1-carboxylate + CO2. It participates in quinol/quinone metabolism; 1,4-dihydroxy-2-naphthoate biosynthesis; 1,4-dihydroxy-2-naphthoate from chorismate: step 2/7. Its pathway is quinol/quinone metabolism; menaquinone biosynthesis. Functionally, catalyzes the thiamine diphosphate-dependent decarboxylation of 2-oxoglutarate and the subsequent addition of the resulting succinic semialdehyde-thiamine pyrophosphate anion to isochorismate to yield 2-succinyl-5-enolpyruvyl-6-hydroxy-3-cyclohexene-1-carboxylate (SEPHCHC). In Staphylococcus aureus (strain USA300), this protein is 2-succinyl-5-enolpyruvyl-6-hydroxy-3-cyclohexene-1-carboxylate synthase.